The following is a 211-amino-acid chain: Probable oligoribonuclease (211 aa).

The Exonuclease domain maps to 38–202 (IVWMDLEMTG…DDIRESIKEL (165 aa)). Tyrosine 159 is a catalytic residue.

Belongs to the oligoribonuclease family.

3'-to-5' exoribonuclease specific for small oligoribonucleotides. The chain is Probable oligoribonuclease from Drosophila melanogaster (Fruit fly).